The following is a 1437-amino-acid chain: Histone-lysine N-methyltransferase NSD3 (1437 aa).

Disordered stretches follow at residues 121–157 and 181–252; these read PHEI…KLKI and QASE…PVQP. Residues 128–139 show a composition bias toward pro residues; the sequence is PSPPQPPPPPSV. A Phosphoserine modification is found at Ser150. Residues 154–157 carry the KIKL motif; sequence KLKI. The span at 187-201 shows a compositional bias: basic residues; the sequence is KSKHESRKEKRKKSN. Residues 202 to 248 show a composition bias toward basic and acidic residues; the sequence is KHDSSRSEERKSHKIPKLEPEEQNRPNERVDTVSEKPREEPVLKEEA. Glycyl lysine isopeptide (Lys-Gly) (interchain with G-Cter in SUMO2) cross-links involve residues Lys218 and Lys245. A PWWP 1 domain is found at 270–333; the sequence is VGDLVWSKVG…EKRVREYKGH (64 aa). Disordered stretches follow at residues 344-365 and 406-465; these read TKQA…QRER and AKKS…EPPP. Residue Lys413 forms a Glycyl lysine isopeptide (Lys-Gly) (interchain with G-Cter in SUMO2) linkage. Over residues 425–445 the composition is skewed to polar residues; it reads VLNTQPEQTNAGEVASSLSST. Ser457 carries the post-translational modification Phosphoserine. Residues Lys502 and Lys532 each participate in a glycyl lysine isopeptide (Lys-Gly) (interchain with G-Cter in SUMO2) cross-link. Positions 540 to 696 are disordered; it reads QDRLIISTPN…DSSLSRRGTG (157 aa). Over residues 546-571 the composition is skewed to polar residues; the sequence is STPNQRNEKPTQSVSSPEATSGSTGS. Over residues 583–595 the composition is skewed to basic and acidic residues; sequence TRSESEKSTEVVP. Ser585, Ser587, and Ser590 each carry phosphoserine. A Glycyl lysine isopeptide (Lys-Gly) (interchain with G-Cter in SUMO2) cross-link involves residue Lys628. Phosphoserine is present on Ser655. The span at 682–692 shows a compositional bias: polar residues; it reads DVQSMDSSLSR. PHD-type zinc fingers lie at residues 701–748, 749–805, and 862–955; these read DTVC…CKTG, QHPC…CSME, and VGFC…CKAG. Lys790 is subject to N6-acetyllysine. Positions 960 to 1022 constitute a PWWP 2 domain; sequence YKQIVWVKLG…QGRVFPYVEG (63 aa). Positions 1033 to 1069 form a coiled coil; the sequence is INKTFKKALEEAAKRFQELKAQRESKEALEIEKNSRK. One can recognise an AWS domain in the interval 1093-1143; it reads SEIPRCNCKPADENPCGLESECLNRMLQYECHPQVCPAGDRCQNQCFTKRL. Residues 1145-1262 enclose the SET domain; sequence PDAEIIKTER…AGMELTFNYN (118 aa). Lys1151 participates in a covalent cross-link: Glycyl lysine isopeptide (Lys-Gly) (interchain with G-Cter in SUMO2). A Post-SET domain is found at 1269–1285; the sequence is GRTECHCGADNCSGFLG. The segment at 1321 to 1368 adopts a PHD-type 4; atypical zinc-finger fold; it reads EDYCFQCGDGGELVMCDKKDCPKAYHLLCLNLTQPPYGKWECPWHQCD.

It belongs to the class V-like SAM-binding methyltransferase superfamily. Histone-lysine methyltransferase family. SET2 subfamily. As to quaternary structure, interacts with BRD4. Interacts (via KIKL motif) with BRD3 (via NET domain). Highly expressed in brain, heart and skeletal muscle. Expressed at lower level in liver and lung.

The protein resides in the nucleus. Its subcellular location is the chromosome. It catalyses the reaction L-lysyl(4)-[histone H3] + 2 S-adenosyl-L-methionine = N(6),N(6)-dimethyl-L-lysyl(4)-[histone H3] + 2 S-adenosyl-L-homocysteine + 2 H(+). It carries out the reaction L-lysyl(27)-[histone H3] + 2 S-adenosyl-L-methionine = N(6),N(6)-dimethyl-L-lysyl(27)-[histone H3] + 2 S-adenosyl-L-homocysteine + 2 H(+). Its function is as follows. Histone methyltransferase. Preferentially dimethylates 'Lys-4' and 'Lys-27' of histone H3 forming H3K4me2 and H3K27me2. H3 'Lys-4' methylation represents a specific tag for epigenetic transcriptional activation, while 'Lys-27' is a mark for transcriptional repression. This chain is Histone-lysine N-methyltransferase NSD3, found in Homo sapiens (Human).